The primary structure comprises 595 residues: Indole-3-acetic acid-amido synthetase GH3.15 (595 aa).

ATP contacts are provided by residues 97 to 98 (SS), T302, and 325 to 330 (FYGSSE). 2 residues coordinate substrate: F325 and F332. Positions 348 and 408 each coordinate ATP.

Belongs to the IAA-amido conjugating enzyme family. Expressed in seedlings, roots, and parts of the siliques.

The enzyme catalyses (indol-3-yl)butanoate + L-cysteine + ATP = (indol-3-yl)butanoyl-L-cysteine + AMP + diphosphate + H(+). It carries out the reaction (indol-3-yl)butanoate + L-glutamine + ATP = (indol-3-yl)butanoyl-L-glutamine + AMP + diphosphate + H(+). The catalysed reaction is 4-(2,4-dichlorophenoxy)butanoate + L-glutamine + ATP = 4-(2,4-dichlorophenoxy)butanoyl-L-glutamine + AMP + diphosphate + H(+). Functionally, indole-3-acetic acid-amido (IAA) synthetase that catalyzes the conjugation of amino acids to auxin specifically using the auxin precursor indole-3-butyric acid (IBA) and glutamine and, possibly, cysteine as substrates. Displays high catalytic activity with the auxinic phenoxyalkanoic acid herbicides 4-(2,4-dichlorophenoxy)butyric acid (2,4-DB) and to some extent 2,4-dichlorophenoxylacetic acid (2,4-D) as substrates, thus conferring resistance to herbicides. This chain is Indole-3-acetic acid-amido synthetase GH3.15, found in Arabidopsis thaliana (Mouse-ear cress).